The following is a 403-amino-acid chain: Phosphoglycerate kinase (403 aa).

Substrate contacts are provided by residues aspartate 21–asparagine 23, arginine 36, histidine 59–arginine 62, arginine 119, and arginine 159. ATP-binding positions include lysine 214, glycine 301, glutamate 332, and glycine 359–serine 362.

Belongs to the phosphoglycerate kinase family. Monomer.

It is found in the cytoplasm. The enzyme catalyses (2R)-3-phosphoglycerate + ATP = (2R)-3-phospho-glyceroyl phosphate + ADP. It functions in the pathway carbohydrate degradation; glycolysis; pyruvate from D-glyceraldehyde 3-phosphate: step 2/5. In Lactobacillus delbrueckii subsp. lactis, this protein is Phosphoglycerate kinase.